The following is a 229-amino-acid chain: tRNA (guanine-N(7)-)-methyltransferase (229 aa).

4 residues coordinate S-adenosyl-L-methionine: E62, E87, D114, and D137. The active site involves D137. K141 contributes to the substrate binding site. The segment at 143-148 is interaction with RNA; the sequence is KHNKRR. Substrate is bound by residues D173 and 208–211; that span reads TKFE.

Belongs to the class I-like SAM-binding methyltransferase superfamily. TrmB family.

It catalyses the reaction guanosine(46) in tRNA + S-adenosyl-L-methionine = N(7)-methylguanosine(46) in tRNA + S-adenosyl-L-homocysteine. Its pathway is tRNA modification; N(7)-methylguanine-tRNA biosynthesis. Its function is as follows. Catalyzes the formation of N(7)-methylguanine at position 46 (m7G46) in tRNA. The protein is tRNA (guanine-N(7)-)-methyltransferase of Francisella philomiragia subsp. philomiragia (strain ATCC 25017 / CCUG 19701 / FSC 153 / O#319-036).